A 500-amino-acid polypeptide reads, in one-letter code: NAD(P)H-quinone oxidoreductase chain 4, chloroplastic (500 aa).

Helical transmembrane passes span 4-24 (FPWL…IFFL), 35-55 (YTIC…CYHF), 87-107 (IGPI…AWPV), 134-154 (LLLF…LLAM), 167-187 (FILY…GVAL), 208-228 (VLEI…SPII), 242-262 (HYST…YGLI), 272-292 (AHSI…IYAA), 305-325 (IAYP…SLTD), 330-350 (GALL…FLAG), 386-406 (LALP…GIIT), 411-431 (LLIP…LTPI), and 462-482 (LFLS…PDFV).

It belongs to the complex I subunit 4 family.

The protein localises to the plastid. The protein resides in the chloroplast thylakoid membrane. The enzyme catalyses a plastoquinone + NADH + (n+1) H(+)(in) = a plastoquinol + NAD(+) + n H(+)(out). It catalyses the reaction a plastoquinone + NADPH + (n+1) H(+)(in) = a plastoquinol + NADP(+) + n H(+)(out). In Solanum tuberosum (Potato), this protein is NAD(P)H-quinone oxidoreductase chain 4, chloroplastic.